The primary structure comprises 450 residues: tRNA-2-methylthio-N(6)-dimethylallyladenosine synthase (450 aa).

One can recognise an MTTase N-terminal domain in the interval 3–118 (KKVFIKTFGC…LPELLQQRER (116 aa)). 6 residues coordinate [4Fe-4S] cluster: Cys12, Cys49, Cys81, Cys155, Cys159, and Cys162. A Radical SAM core domain is found at 141 to 376 (SVQGASAFVS…VIDTHIRSIS (236 aa)). The TRAM domain occupies 377 to 440 (ASRVGTVQRI…AYTLRGQYCA (64 aa)).

Belongs to the methylthiotransferase family. MiaB subfamily. As to quaternary structure, monomer. [4Fe-4S] cluster is required as a cofactor.

It is found in the cytoplasm. It catalyses the reaction N(6)-dimethylallyladenosine(37) in tRNA + (sulfur carrier)-SH + AH2 + 2 S-adenosyl-L-methionine = 2-methylsulfanyl-N(6)-dimethylallyladenosine(37) in tRNA + (sulfur carrier)-H + 5'-deoxyadenosine + L-methionine + A + S-adenosyl-L-homocysteine + 2 H(+). Functionally, catalyzes the methylthiolation of N6-(dimethylallyl)adenosine (i(6)A), leading to the formation of 2-methylthio-N6-(dimethylallyl)adenosine (ms(2)i(6)A) at position 37 in tRNAs that read codons beginning with uridine. This is tRNA-2-methylthio-N(6)-dimethylallyladenosine synthase from Verminephrobacter eiseniae (strain EF01-2).